A 114-amino-acid chain; its full sequence is MTRVKRGNIARNRRNEILDLAKGFRGSSSKLYRTAQQRTIKALTNSYKDRKNKKREFVKIWVSRINAAVRLSGLNYSSFQNQLKFHKIRLNRKICSQIALQDQESFTKLLDLII.

This sequence belongs to the bacterial ribosomal protein bL20 family.

It is found in the plastid. Its function is as follows. Binds directly to 23S ribosomal RNA and is necessary for the in vitro assembly process of the 50S ribosomal subunit. It is not involved in the protein synthesizing functions of that subunit. The sequence is that of Large ribosomal subunit protein bL20c from Prototheca wickerhamii.